The following is a 307-amino-acid chain: Ornithine carbamoyltransferase (307 aa).

Carbamoyl phosphate contacts are provided by residues 50–53, Gln77, Arg101, and 128–131; these read STRT and HPCQ. Residues Asn160, Asp224, and 228-229 each bind L-ornithine; that span reads SM. Residues 264 to 265 and Arg292 contribute to the carbamoyl phosphate site; that span reads CL.

This sequence belongs to the aspartate/ornithine carbamoyltransferase superfamily. OTCase family. In terms of assembly, homotrimer.

It is found in the cytoplasm. It catalyses the reaction carbamoyl phosphate + L-ornithine = L-citrulline + phosphate + H(+). Its pathway is amino-acid biosynthesis; L-arginine biosynthesis; L-arginine from L-ornithine and carbamoyl phosphate: step 1/3. Functionally, reversibly catalyzes the transfer of the carbamoyl group from carbamoyl phosphate (CP) to the N(epsilon) atom of ornithine (ORN) to produce L-citrulline, which is a substrate for argininosuccinate synthetase, the enzyme involved in the final step in arginine biosynthesis. This is Ornithine carbamoyltransferase (argF) from Mycobacterium bovis (strain ATCC BAA-935 / AF2122/97).